The following is a 183-amino-acid chain: Large ribosomal subunit protein uL6 (183 aa).

The protein belongs to the universal ribosomal protein uL6 family. Part of the 50S ribosomal subunit.

Functionally, this protein binds to the 23S rRNA, and is important in its secondary structure. It is located near the subunit interface in the base of the L7/L12 stalk, and near the tRNA binding site of the peptidyltransferase center. This is Large ribosomal subunit protein uL6 from Chlamydia trachomatis serovar D (strain ATCC VR-885 / DSM 19411 / UW-3/Cx).